The sequence spans 1043 residues: F-box DNA helicase 1 (1043 aa).

Positions 30 to 56 (QRWTNRDPNHGLYPKPRTKRGSRGQGS) are disordered. A PIP-box motif is present at residues 57–64 (QRCIPEFF). Residues 101–191 (CALPQEGSAG…QDAGDVGPDP (91 aa)) form a disordered region. Residue serine 124 is modified to Phosphoserine. Positions 138–184 (SRWDGVSKKAPRHHLSVPCTRPREARQEAEDSTSRLSAESGETDQDA) constitute an F-box domain. Positions 158 to 170 (RPREARQEAEDST) are enriched in basic and acidic residues. A UvrD-like helicase ATP-binding domain is found at 442–705 (THEQQLILNH…FYLTQSFRFG (264 aa)). 463-470 (AFAGTGKT) contributes to the ATP binding site. The APIM motif motif lies at 807-811 (KFIRR).

It belongs to the helicase family. UvrD subfamily. As to quaternary structure, part of the SCF (SKP1-CUL1-F-box) E3 ubiquitin-protein ligase complex SCF(FBH1) composed of CUL1, SKP1, RBX1 and FBH1. Interacts with RAD51. Interacts with RPA2. Interacts (via PIP-box and RanBP2-type zinc finger) with PCNA. Ubiquitinated. Ubiquitination by the DCX(DTL) complex, also named CRL4(CDT2), leading to its degradation: ubiquitination takes place after its localization to DNA damage sites, possibly to facilitate the translesion synthesis (TLS) pathway.

The protein resides in the nucleus. The protein localises to the chromosome. It catalyses the reaction Couples ATP hydrolysis with the unwinding of duplex DNA by translocating in the 3'-5' direction.. The enzyme catalyses ATP + H2O = ADP + phosphate + H(+). It participates in protein modification; protein ubiquitination. In terms of biological role, 3'-5' DNA helicase and substrate-recognition component of the SCF(FBH1) E3 ubiquitin ligase complex that plays a key role in response to stalled/damaged replication forks. Involved in genome maintenance by acting as an anti-recombinogenic helicase and preventing extensive strand exchange during homologous recombination: promotes RAD51 filament dissolution from stalled forks, thereby inhibiting homologous recombination and preventing excessive recombination. Also promotes cell death and DNA double-strand breakage in response to replication stress: together with MUS81, promotes the endonucleolytic DNA cleavage following prolonged replication stress via its helicase activity, possibly to eliminate cells with excessive replication stress. Plays a major role in remodeling of stalled DNA forks by catalyzing fork regression, in which the fork reverses and the two nascent DNA strands anneal. In addition to the helicase activity, also acts as the substrate-recognition component of the SCF(FBH1) E3 ubiquitin ligase complex, a complex that mediates ubiquitination of RAD51, leading to regulate RAD51 subcellular location. In Homo sapiens (Human), this protein is F-box DNA helicase 1.